We begin with the raw amino-acid sequence, 502 residues long: Facilitated trehalose transporter Tret1 (502 aa).

Topologically, residues 1 to 38 (MGVENTKQTMSSQNIKPAKDSDDVLHTQFKEVKRSPMR) are cytoplasmic. Residues 39-59 (YTMQLLAALAVSMASLMIGYS) form a helical membrane-spanning segment. The Extracellular segment spans residues 60 to 83 (SSYTSPALVSMRDNTTATFEVTMD). Asn73 carries an N-linked (GlcNAc...) asparagine glycan. Residues 84-104 (MAMWIGSIMPLSALIGGIIGG) form a helical membrane-spanning segment. The Cytoplasmic segment spans residues 105-120 (PCIEYIGRRNTILSTA). A helical transmembrane segment spans residues 121–141 (LPFLAGWLFIALATNVAMILV). Over 142–144 (GRS) the chain is Extracellular. The chain crosses the membrane as a helical span at residues 145–165 (ICGFCVGVASLSLPVYLGESI). At 166–172 (QPEVRGS) the chain is on the cytoplasmic side. A helical transmembrane segment spans residues 173–193 (LGLLPTVFGNSGILMCFTAGM). Residues 194–199 (YLAWRN) lie on the Extracellular side of the membrane. Residues 200–220 (LALLGACIPIIFLILMFLIPE) traverse the membrane as a helical segment. The Cytoplasmic portion of the chain corresponds to 221–282 (TPRWYISKGK…ELFRKNHIKP (62 aa)). Residues 283-303 (VFISLGLMFFQQFSGINAVIF) traverse the membrane as a helical segment. Topologically, residues 304 to 319 (YTVQIFKDSGSTVDEN) are extracellular. Asn319 carries N-linked (GlcNAc...) asparagine glycosylation. A helical transmembrane segment spans residues 320–340 (LSTIIVGLVNFISTFVAAMII). At 341-346 (DRLGRK) the chain is on the cytoplasmic side. The chain crosses the membrane as a helical span at residues 347–367 (MLLYISSILMCITLFTFGTFF). Topologically, residues 368–376 (YVKELMDVT) are extracellular. Residues 377-397 (AFGWIPLMSLIVYVIGFSFGF) traverse the membrane as a helical segment. At 398–410 (GPIPWLMMGEILP) the chain is on the cytoplasmic side. A helical transmembrane segment spans residues 411 to 433 (VKIRGTAASVATAFNWSCTFVVT). Residues 434–446 (KTYEDLVLHIGPY) are Extracellular-facing. A helical membrane pass occupies residues 447 to 467 (GTFWLFGTLVAVAFIFVIICV). At 468-502 (PETRGRSLEEIERRFAGPVRRTSAIANLKPMPITI) the chain is on the cytoplasmic side.

It belongs to the major facilitator superfamily. Sugar transporter (TC 2.A.1.1) family. Trehalose transporter subfamily.

The protein localises to the cell membrane. Moderate-capacity facilitative transporter for trehalose. Does not transport maltose, sucrose or lactose. Mediates the bidirectional transfer of trehalose. Responsible for the transport of trehalose synthesized in the fat body and the incorporation of trehalose into other tissues that require a carbon source, thereby regulating trehalose levels in the hemolymph. The chain is Facilitated trehalose transporter Tret1 from Apis mellifera ligustica (Common honeybee).